A 190-amino-acid polypeptide reads, in one-letter code: Threonylcarbamoyl-AMP synthase (190 aa).

In terms of domain architecture, YrdC-like spans 10–190 (PQDKESVYRH…DWHSRQVIRA (181 aa)).

It belongs to the SUA5 family. TsaC subfamily.

It is found in the cytoplasm. It carries out the reaction L-threonine + hydrogencarbonate + ATP = L-threonylcarbamoyladenylate + diphosphate + H2O. Required for the formation of a threonylcarbamoyl group on adenosine at position 37 (t(6)A37) in tRNAs that read codons beginning with adenine. Catalyzes the conversion of L-threonine, HCO(3)(-)/CO(2) and ATP to give threonylcarbamoyl-AMP (TC-AMP) as the acyladenylate intermediate, with the release of diphosphate. This chain is Threonylcarbamoyl-AMP synthase, found in Dichelobacter nodosus (strain VCS1703A).